A 794-amino-acid chain; its full sequence is FT-interacting protein 1 (794 aa).

The segment covering 1-27 (MAAKDGAKSQEDYKLKDMKPELGERWP) has biased composition (basic and acidic residues). The tract at residues 1–34 (MAAKDGAKSQEDYKLKDMKPELGERWPHGGQRGG) is disordered. C2 domains follow at residues 37–158 (WIGS…PQWY), 198–321 (VQGE…SKWY), and 364–492 (YISD…THSY). Residues D76, D123, E125, and E131 each contribute to the Ca(2+) site. A run of 4 helical transmembrane segments spans residues 510 to 532 (LAVR…PLLP), 595 to 615 (IVSV…VCYW), 619 to 639 (LTTI…ELIL), and 737 to 757 (LFVI…FKII).

The protein belongs to the MCTP family. As to quaternary structure, interacts with FT in phloem companion cells. Ca(2+) is required as a cofactor. Expressed in the vascular tissues of roots, cotyledons and rosette leaves. Specifically located in the phloem including companion cells. Observed in flowers. Not detected in the shoot apical meristem.

The protein resides in the endoplasmic reticulum membrane. It localises to the cell junction. It is found in the plasmodesma. In terms of biological role, involved in the export of FT from the phloem companion cells to the sieve elements through the plasmodesmata. Regulates flowering time under long days. May function as a signaling molecule by regulating the trafficking of other regulators. The polypeptide is FT-interacting protein 1 (Arabidopsis thaliana (Mouse-ear cress)).